The sequence spans 591 residues: uncharacterized protein (591 aa).

An N-terminal signal peptide occupies residues 1–30 (MGKLLFGKLVFKKSLFLLSGMSSLAVFLTA). The N-palmitoyl cysteine moiety is linked to residue cysteine 31. Cysteine 31 carries the S-diacylglycerol cysteine lipid modification. The segment covering 476-488 (KKKLSEVATKKNE) has biased composition (basic and acidic residues). Disordered regions lie at residues 476 to 497 (KKKL…NGSN) and 510 to 535 (SSSS…DNDG). Residues 510 to 523 (SSSSTSMRNGSSDS) show a composition bias toward low complexity.

To T.pallidum TmpC.

The protein resides in the cell membrane. This is an uncharacterized protein from Mycoplasma genitalium (strain ATCC 33530 / DSM 19775 / NCTC 10195 / G37) (Mycoplasmoides genitalium).